We begin with the raw amino-acid sequence, 378 residues long: 1-acyl-sn-glycerol-3-phosphate acyltransferase delta (378 aa).

Residues 11–31 (FLCHLIFCYVFIVSGLIINTI) form a helical membrane-spanning segment. Positions 96 to 101 (HKFEID) match the HXXXXD motif motif. Helical transmembrane passes span 125–145 (ELAYVPIIGWMWYFTEMVFCT), 307–327 (TLVNWLFWASMLLYPFFRFVI), and 338–358 (LASFVLVFFVASMGVRWMIGV).

It belongs to the 1-acyl-sn-glycerol-3-phosphate acyltransferase family.

Its subcellular location is the endoplasmic reticulum membrane. It catalyses the reaction a 1-acyl-sn-glycero-3-phosphate + an acyl-CoA = a 1,2-diacyl-sn-glycero-3-phosphate + CoA. The catalysed reaction is (4Z,7Z,10Z,13Z,16Z,19Z)-docosahexaenoyl-CoA + 1-hexadecanoyl-sn-glycero-3-phosphate = 1-hexadecanoyl-2-(4Z,7Z,10Z,13Z,16Z,19Z-docosahexaenoyl)-sn-glycero-3-phosphate + CoA. It carries out the reaction 1-octadecanoyl-sn-glycero-3-phosphate + (9Z,12Z)-octadecadienoyl-CoA = 1-octadecanoyl-2-(9Z,12Z-octadecadienoyl)-sn-glycero-3-phosphate + CoA. The enzyme catalyses 1-octadecanoyl-sn-glycero-3-phosphate + (4Z,7Z,10Z,13Z,16Z,19Z)-docosahexaenoyl-CoA = 1-octadecanoyl-2-(4Z,7Z,10Z,13Z,16Z,19Z-docosahexaenoyl)-sn-glycero-3-phosphate + CoA. It catalyses the reaction (4Z,7Z,10Z,13Z,16Z,19Z)-docosahexaenoyl-CoA + 1-(9Z-octadecenoyl)-sn-glycero-3-phosphate = 1-(9Z-octadecenoyl)-2-(4Z,7Z,10Z,13Z,16Z,19Z-docosahexaenoyl)-sn-glycero-3-phosphate + CoA. Its pathway is phospholipid metabolism; CDP-diacylglycerol biosynthesis; CDP-diacylglycerol from sn-glycerol 3-phosphate: step 2/3. Its function is as follows. Converts 1-acyl-sn-glycerol-3-phosphate (lysophosphatidic acid or LPA) into 1,2-diacyl-sn-glycerol-3-phosphate (phosphatidic acid or PA) by incorporating an acyl moiety at the sn-2 position of the glycerol backbone. Exhibits high acyl-CoA specificity for polyunsaturated fatty acyl-CoA, especially docosahexaenoyl-CoA (22:6-CoA, DHA-CoA). This Bos taurus (Bovine) protein is 1-acyl-sn-glycerol-3-phosphate acyltransferase delta (AGPAT4).